A 217-amino-acid polypeptide reads, in one-letter code: Uracil-DNA glycosylase (217 aa).

Catalysis depends on Asp-62, which acts as the Proton acceptor.

It belongs to the uracil-DNA glycosylase (UDG) superfamily. UNG family.

The protein resides in the cytoplasm. The enzyme catalyses Hydrolyzes single-stranded DNA or mismatched double-stranded DNA and polynucleotides, releasing free uracil.. Its function is as follows. Excises uracil residues from the DNA which can arise as a result of misincorporation of dUMP residues by DNA polymerase or due to deamination of cytosine. This Streptococcus pneumoniae serotype 19F (strain G54) protein is Uracil-DNA glycosylase.